The following is a 255-amino-acid chain: MTVGVLALQGSFNEHIAALRRLGVQGVEIRKADQLLTVSSLIIPGGESTTMAKLAEYHNLFPALREFVKMGKPVWGTCAGLIFLADRAVGQKEGGQELVGGLDCTVHRNFFGSQIQSFEADILVPQLTSQEGGPETYRGVFIRAPAVLDVGPDVEVLADYPVPSNKVLYSSSTVQIQEEDALPETKVIVAVKQGNLLATAFHPELTADTRWHSYFIKMTKEIEQGASSSSSKTIVSVGETSAGPEPAKPDLPIFQ.

L-glutamine is bound at residue 46-48 (GES). The Nucleophile role is filled by C78. L-glutamine contacts are provided by residues R108 and 142 to 143 (IR). Active-site charge relay system residues include H202 and E204. The tract at residues 225–255 (GASSSSSKTIVSVGETSAGPEPAKPDLPIFQ) is disordered.

Belongs to the glutaminase PdxT/SNO family. In terms of assembly, interacts with PDX1.1 or PDX1.3, but not with PDX1.2. Binds to RPA2A. Strongly expressed in roots, stems, leaves and flowers.

Its subcellular location is the cytoplasm. The catalysed reaction is aldehydo-D-ribose 5-phosphate + D-glyceraldehyde 3-phosphate + L-glutamine = pyridoxal 5'-phosphate + L-glutamate + phosphate + 3 H2O + H(+). It catalyses the reaction L-glutamine + H2O = L-glutamate + NH4(+). The protein operates within cofactor biosynthesis; pyridoxal 5'-phosphate biosynthesis. Functionally, catalyzes the hydrolysis of glutamine to glutamate and ammonia as part of the biosynthesis of pyridoxal 5'-phosphate. The resulting ammonia molecule is channeled to the active site of PDX1. Involved in the indirect resistance to singlet oxygen-generating photosensitizers. The chain is Probable pyridoxal 5'-phosphate synthase subunit PDX2 (PDX2) from Arabidopsis thaliana (Mouse-ear cress).